Reading from the N-terminus, the 55-residue chain is Large ribosomal subunit protein bL33 (55 aa).

Belongs to the bacterial ribosomal protein bL33 family.

The protein is Large ribosomal subunit protein bL33 of Azorhizobium caulinodans (strain ATCC 43989 / DSM 5975 / JCM 20966 / LMG 6465 / NBRC 14845 / NCIMB 13405 / ORS 571).